The primary structure comprises 114 residues: Endoribonuclease MazF2 (114 aa).

This sequence belongs to the PemK/MazF family. In terms of assembly, probably forms a complex with cognate antitoxin MazE2.

Toxic component of a type II toxin-antitoxin (TA) system. Acts as an endoribonuclease on single-strand RNA, cleaving between the second and third bases in the sequences CUCCU and UUCCU. Neutralized by coexpression with cognate antitoxin MazE2. This Mycobacterium bovis (strain ATCC BAA-935 / AF2122/97) protein is Endoribonuclease MazF2 (mazF2).